The chain runs to 348 residues: 3-isopropylmalate dehydrogenase (348 aa).

Residue 76–87 (GPKWTDPNNRPE) participates in NAD(+) binding. Substrate-binding residues include R94, R104, R132, and D217. Mg(2+)-binding residues include D217, D241, and D245. Residue 275–287 (GSAPDIAGKNVAN) coordinates NAD(+).

Belongs to the isocitrate and isopropylmalate dehydrogenases family. LeuB type 1 subfamily. In terms of assembly, homodimer. It depends on Mg(2+) as a cofactor. Mn(2+) is required as a cofactor.

It is found in the cytoplasm. The enzyme catalyses (2R,3S)-3-isopropylmalate + NAD(+) = 4-methyl-2-oxopentanoate + CO2 + NADH. The protein operates within amino-acid biosynthesis; L-leucine biosynthesis; L-leucine from 3-methyl-2-oxobutanoate: step 3/4. Functionally, catalyzes the oxidation of 3-carboxy-2-hydroxy-4-methylpentanoate (3-isopropylmalate) to 3-carboxy-4-methyl-2-oxopentanoate. The product decarboxylates to 4-methyl-2 oxopentanoate. The sequence is that of 3-isopropylmalate dehydrogenase from Staphylococcus aureus (strain MRSA252).